The chain runs to 165 residues: Chorismate pyruvate-lyase (165 aa).

Substrate-binding residues include Met35, Arg77, Leu115, and Glu156.

The protein belongs to the UbiC family. As to quaternary structure, monomer.

Its subcellular location is the cytoplasm. It catalyses the reaction chorismate = 4-hydroxybenzoate + pyruvate. The protein operates within cofactor biosynthesis; ubiquinone biosynthesis. In terms of biological role, removes the pyruvyl group from chorismate, with concomitant aromatization of the ring, to provide 4-hydroxybenzoate (4HB) for the ubiquinone pathway. The protein is Chorismate pyruvate-lyase of Shigella dysenteriae serotype 1 (strain Sd197).